The primary structure comprises 431 residues: Glutamate--tRNA ligase 2 (431 aa).

Residues Pro-6–Asn-16 carry the 'HIGH' region motif. A 'KMSKS' region motif is present at residues Lys-235–Arg-239. Lys-238 lines the ATP pocket.

It belongs to the class-I aminoacyl-tRNA synthetase family. Glutamate--tRNA ligase type 1 subfamily. Monomer.

The protein resides in the cytoplasm. The enzyme catalyses tRNA(Glu) + L-glutamate + ATP = L-glutamyl-tRNA(Glu) + AMP + diphosphate. Catalyzes the attachment of glutamate to tRNA(Glu) in a two-step reaction: glutamate is first activated by ATP to form Glu-AMP and then transferred to the acceptor end of tRNA(Glu). This chain is Glutamate--tRNA ligase 2, found in Campylobacter jejuni subsp. doylei (strain ATCC BAA-1458 / RM4099 / 269.97).